The chain runs to 170 residues: Cathelicidin antimicrobial peptide (170 aa).

Residues M1 to A30 form the signal peptide. Residues Q31 to R131 constitute a propeptide, cathelin-like domain (CLD). 2 disulfides stabilise this stretch: C86/C97 and C108/C125. The tract at residues L150–G162 is active core.

It belongs to the cathelicidin family. Monomer, homodimer or homotrimer (in vitro). Oligomerizes as tetra- or hexamer in solution (in vitro). Post-translationally, proteolytically cleaved by proteinase PRTN3 into antibacterial peptide LL-37. Proteolytically cleaved by cathepsin CTSG and neutrophil elastase ELANE. In terms of processing, resistant to proteolytic degradation in solution, and when bound to both zwitterionic (mimicking mammalian membranes) and negatively charged membranes (mimicking bacterial membranes). After secretion onto the skin surface, the CAMP gene product is processed by a serine protease-dependent mechanism into multiple novel antimicrobial peptides distinct from and shorter than cathelicidin LL-37. These peptides show enhanced antimicrobial action, acquiring the ability to kill skin pathogens such as S.aureus, E.coli and C.albicans. These peptides have lost the ability to stimulate CXCL8/IL8 release from keratinocytes. The peptides act synergistically, killing bacteria at lower concentrations when present together, and maintain activity at increased salt condition.

The protein resides in the secreted. It is found in the vesicle. Functionally, antimicrobial protein that is an integral component of the innate immune system. Binds to bacterial lipopolysaccharides (LPS). Acts via neutrophil N-formyl peptide receptors to enhance the release of CXCL2. Postsecretory processing generates multiple cathelicidin antimicrobial peptides with various lengths which act as a topical antimicrobial defense in sweat on skin. The unprocessed precursor form, cathelicidin antimicrobial peptide, inhibits the growth of Gram-negative E.coli and E.aerogenes with efficiencies comparable to that of the mature peptide LL-37 (in vitro). In terms of biological role, antimicrobial peptide that is an integral component of the innate immune system. Binds to bacterial lipopolysaccharides (LPS). Causes membrane permeabilization by forming transmembrane pores (in vitro). Causes lysis of E.coli. Exhibits antimicrobial activity against Gram-negative bacteria such as P.aeruginosa, S.typhimurium, E.aerogenes, E.coli and P.syringae, Gram-positive bacteria such as L.monocytogenes, S.epidermidis, S.pyogenes and S.aureus, as well as vancomycin-resistant enterococci (in vitro). Exhibits antimicrobial activity against methicillin-resistant S.aureus, P.mirabilis, and C.albicans in low-salt media, but not in media containing 100 mM NaCl (in vitro). Forms chiral supramolecular assemblies with quinolone signal (PQS) molecules of P.aeruginosa, which may lead to interference of bacterial quorum signaling and perturbance of bacterial biofilm formation. May form supramolecular fiber-like assemblies on bacterial membranes. Induces cytokine and chemokine producation as well as TNF/TNFA and CSF2/GMCSF production in normal human keratinocytes. Exhibits hemolytic activity against red blood cells. Exhibits antimicrobial activity against E.coli and B.megaterium (in vitro). This is Cathelicidin antimicrobial peptide from Papio papio (Guinea baboon).